The chain runs to 151 residues: 3-hydroxyacyl-[acyl-carrier-protein] dehydratase FabZ (151 aa).

The active site involves histidine 52.

It belongs to the thioester dehydratase family. FabZ subfamily.

It is found in the cytoplasm. The catalysed reaction is a (3R)-hydroxyacyl-[ACP] = a (2E)-enoyl-[ACP] + H2O. In terms of biological role, involved in unsaturated fatty acids biosynthesis. Catalyzes the dehydration of short chain beta-hydroxyacyl-ACPs and long chain saturated and unsaturated beta-hydroxyacyl-ACPs. The protein is 3-hydroxyacyl-[acyl-carrier-protein] dehydratase FabZ (fabZ1) of Lactococcus lactis subsp. lactis (strain IL1403) (Streptococcus lactis).